The sequence spans 283 residues: Lectin-like protein At1g53080 (283 aa).

Residues 1–23 form the signal peptide; it reads MQIHKLCIFVLFISLLSSKTISA. Residues 24 to 277 are legume-lectin like; that stretch reads VKFNFNRFDG…RHDIWSWSFE (254 aa). Residues Asn84 and Asn138 are each glycosylated (N-linked (GlcNAc...) asparagine). Ser247 carries the phosphoserine modification.

It belongs to the leguminous lectin family.

It is found in the secreted. The protein resides in the extracellular space. Its subcellular location is the apoplast. The polypeptide is Lectin-like protein At1g53080 (Arabidopsis thaliana (Mouse-ear cress)).